A 475-amino-acid chain; its full sequence is Ankyrin repeat, SAM and basic leucine zipper domain-containing protein 1 (475 aa).

The disordered stretch occupies residues 1–24 (MAAAVQRGLPVAGGGESSESEDDG). Ser-17, Ser-18, and Ser-20 each carry phosphoserine. 6 ANK repeats span residues 45-74 (EKNE…SVES), 78-107 (YGWT…NASF), 110-144 (DKHT…DPNV), 148-177 (RLMT…EVNA), 181-210 (NGYT…NKML), and 214-243 (DGKT…PLEG). An SAM domain is found at 272-334 (SYAAFGDLEI…KILAALKELA (63 aa)).

Interacts with DDX4, PIWIL1, RANBP9 and TDRD1.

Its subcellular location is the cytoplasm. Functionally, plays a central role during spermatogenesis by repressing transposable elements and preventing their mobilization, which is essential for the germline integrity. Acts via the piRNA metabolic process, which mediates the repression of transposable elements during meiosis by forming complexes composed of piRNAs and Piwi proteins and governs the methylation and subsequent repression of transposons. Its association with pi-bodies suggests a participation in the primary piRNAs metabolic process. Required prior to the pachytene stage to facilitate the production of multiple types of piRNAs, including those associated with repeats involved in the regulation of retrotransposons. May act by mediating protein-protein interactions during germ cell maturation. This is Ankyrin repeat, SAM and basic leucine zipper domain-containing protein 1 (ASZ1) from Loxodonta africana (African elephant).